The primary structure comprises 2262 residues: Klarsicht protein (2262 aa).

Disordered regions lie at residues 1-140 (MEMQ…VGND), 345-410 (QQQQ…GEGN), 442-475 (AANG…LNEV), 514-561 (QSQS…PDIG), 800-832 (ATSS…DKEN), 859-898 (SNYD…QLQM), 1000-1031 (HLPP…VSPV), 1115-1157 (PSCK…SEGF), 1246-1316 (SGLA…ELGG), and 1533-1670 (VRRK…QQSR). The tract at residues 1 to 1774 (MEMQQENETG…KPTPELLDTE (1774 aa)) is required for apical microtubules localization. Residues 1-2215 (MEMQQENETG…KRGWAWRIAR (2215 aa)) are Cytoplasmic-facing. The segment covering 58–67 (KIEHTTKPLK) has biased composition (basic and acidic residues). Polar residues predominate over residues 131–140 (NYGTNSVGND). Over residues 345 to 402 (QQQQLSSQQPASLTSNCSSESTSESATKSSSLSSGFASDPVTTPIGTAAAAPPSSSTH) the composition is skewed to low complexity. Residues 446 to 475 (LDDDEDEEEDTEDDSFGYEGEATEDDLNEV) are compositionally biased toward acidic residues. The segment covering 514-525 (QSQSRSQQVPSQ) has biased composition (low complexity). Acidic residues predominate over residues 546 to 560 (EADEELEEEDEDPDI). Composition is skewed to low complexity over residues 809-818 (STAVSSTTAT) and 859-881 (SNYD…SNSN). Residues 882-894 (GRLTETSATSRVT) show a composition bias toward polar residues. The span at 1006–1018 (PAKSAKSTKSQAS) shows a compositional bias: low complexity. Residues 1019–1028 (NATVSGSTLV) are compositionally biased toward polar residues. Residues 1246–1259 (SGLASHSISESALD) are compositionally biased toward polar residues. A compositionally biased stretch (low complexity) spans 1267 to 1280 (PRAASSSGTGSNAA). The span at 1288–1299 (SLRRRKARKKRI) shows a compositional bias: basic residues. Low complexity predominate over residues 1550–1559 (QSDQQQQQLQ). Residues 1560 to 1583 (VTPSLSASATALMTTPKNQSTSHQ) show a composition bias toward polar residues. Composition is skewed to basic and acidic residues over residues 1586 to 1596 (HRAESVGRKLD) and 1610 to 1640 (RTSE…EKCI). Residues 1809-1842 (LTKQERRLQSALEEQEQQQESEQLKQQKLVEEEK) adopt a coiled-coil conformation. The segment at 2092 to 2205 (HQQKQQIQQN…GEGADPAQTS (114 aa)) is disordered. Residues 2093 to 2105 (QQKQQIQQNQTQQ) are compositionally biased toward low complexity. Residues 2130 to 2142 (RRGKGARKARQAK) are compositionally biased toward basic residues. The 56-residue stretch at 2207–2262 (RGWAWRIARAAVPMQVALFTIFCAACLMQPNCCDNLNNLSMSFTPQLRYIRGPPPI) folds into the KASH domain. Residues 2216 to 2236 (AAVPMQVALFTIFCAACLMQP) traverse the membrane as a helical; Anchor for type IV membrane protein segment. Residues 2237–2262 (NCCDNLNNLSMSFTPQLRYIRGPPPI) lie on the Perinuclear space side of the membrane.

This sequence belongs to the nesprin family. As to quaternary structure, core component of LINC complexes which are composed of inner nuclear membrane SUN domain-containing proteins coupled to outer nuclear membrane KASH domain-containing nesprins. Interacts with kud. Interacts with Msp300; this interaction allows the anchoring of Msp300 nuclear ring structure to the nuclear envelope. As to expression, expressed ubiquitously in the eye disk, but at much higher levels posterior to the morphogenetic furrow. Expressed in R-cells and also in non-neural cone cells.

The protein localises to the cytoplasm. The protein resides in the cytoskeleton. It is found in the microtubule organizing center. Its subcellular location is the perinuclear region. It localises to the nucleus membrane. The protein localises to the nucleus envelope. Functionally, component of the LINC (LInker of Nucleoskeleton and Cytoskeleton) complex involved in the connection between the nuclear lamina and the cytoskeleton. Plays a role in the nuclear positioning and links the nucleus to the microtubule organizing center (MTOC). Collaborates with Klar to promote even spacing of the myonuclei at the periphery of striated muscle fibers by mediating a tight association between a nuclear ring structure of Msp300 and the plus ends of a unique astral microtubule (MT) network. The chain is Klarsicht protein from Drosophila melanogaster (Fruit fly).